The sequence spans 695 residues: Segment polarity protein dishevelled homolog DVL-1 (695 aa).

The DIX domain occupies M1–E85. The disordered stretch occupies residues S89 to S235. The span at S142–R151 shows a compositional bias: basic residues. The span at N152–L171 shows a compositional bias: basic and acidic residues. Positions S177 to I192 are enriched in low complexity. S194 is subject to Phosphoserine. Over residues S201–R214 the composition is skewed to low complexity. Basic residues predominate over residues L215 to L228. In terms of domain architecture, PDZ spans T251 to E323. The DEP domain maps to P425–D499. Residues S559–R580 are compositionally biased toward low complexity. Residues S559–L641 are disordered. Residues S622–S635 are compositionally biased toward polar residues.

The protein belongs to the DSH family. Interacts with CXXC4. Interacts (via PDZ domain) with TMEM88. Interacts with BRD7 and INVS. Interacts (via PDZ domain) with VANGL1 and VANGL2 (via C-terminus). Interacts (via PDZ domain) with NXN. Interacts with ARRB1; the interaction is enhanced by phosphorylation of DVL1. Interacts with CYLD. Interacts (via PDZ domain) with RYK. Self-associates (via DIX domain) and forms higher homooligomers. Interacts (via PDZ domain) with DACT1 and FZD7, where DACT1 and FZD7 compete for the same binding site. Interacts (via DEP domain) with MUSK; the interaction is direct and mediates the formation a DVL1, MUSK and PAK1 ternary complex involved in AChR clustering. Interacts with DCDC2. Interacts with FOXK2. Interacts with PKD1 (via extracellular domain). Interacts (via PDZ domain) with CCDC88C/DAPLE; competes with CCDC88C for binding to frizzled receptor FZD7 and dissociates from CCDC88C following initiation of non-canonical Wnt signaling when CCDC88C displaces DVL1 from ligand-activated FZD7. Post-translationally, ubiquitinated; undergoes both 'Lys-48'-linked ubiquitination, leading to its subsequent degradation by the ubiquitin-proteasome pathway, and 'Lys-63'-linked ubiquitination. The interaction with INVS is required for ubiquitination. Deubiquitinated by CYLD, which acts on 'Lys-63'-linked ubiquitin chains. As to expression, high levels are seen in the brain, testis and kidney, lower levels in the ovary, breast, muscle, liver and small intestine, and very low levels are seen in the spleen and thymus. A moderate level expression is seen in the heart.

It localises to the cell membrane. The protein localises to the cytoplasm. It is found in the cytosol. Its subcellular location is the cytoplasmic vesicle. In terms of biological role, participates in Wnt signaling by binding to the cytoplasmic C-terminus of frizzled family members and transducing the Wnt signal to down-stream effectors. Plays a role both in canonical and non-canonical Wnt signaling. Plays a role in the signal transduction pathways mediated by multiple Wnt genes. Required for LEF1 activation upon WNT1 and WNT3A signaling. DVL1 and PAK1 form a ternary complex with MUSK which is important for MUSK-dependent regulation of AChR clustering during the formation of the neuromuscular junction (NMJ). The sequence is that of Segment polarity protein dishevelled homolog DVL-1 (Dvl1) from Mus musculus (Mouse).